We begin with the raw amino-acid sequence, 489 residues long: Rhamnulokinase (489 aa).

Position 13–17 (13–17) interacts with ATP; it reads ASSGR. Cysteines 68 and 222 form a disulfide. Residues G83 and 236–238 contribute to the substrate site; that span reads HDT. The active-site Proton acceptor is the D237. T259 contacts ATP. Residue N296 coordinates substrate. Q304 contacts ATP. The cysteines at positions 353 and 370 are disulfide-linked. G402 provides a ligand contact to ATP. Cysteines 413 and 417 form a disulfide.

It belongs to the rhamnulokinase family. Monomer. The cofactor is Mg(2+).

It carries out the reaction L-rhamnulose + ATP = L-rhamnulose 1-phosphate + ADP + H(+). It participates in carbohydrate degradation; L-rhamnose degradation; glycerone phosphate from L-rhamnose: step 2/3. Its function is as follows. Involved in the catabolism of L-rhamnose (6-deoxy-L-mannose). Catalyzes the transfer of the gamma-phosphate group from ATP to the 1-hydroxyl group of L-rhamnulose to yield L-rhamnulose 1-phosphate. The polypeptide is Rhamnulokinase (Escherichia coli O1:K1 / APEC).